The following is a 494-amino-acid chain: Fumarate hydratase, mitochondrial (494 aa).

Residues Met-1–Asn-15 constitute a mitochondrion transit peptide. Residues Ser-128–Thr-130, His-159–Asp-162, Ser-169–Asn-171, and Thr-217 contribute to the substrate site. Residue His-218 is the Proton donor/acceptor of the active site. The active site involves Ser-348. Substrate is bound by residues Ser-349 and Lys-354–Asn-356.

This sequence belongs to the class-II fumarase/aspartase family. Fumarase subfamily. In terms of assembly, homotetramer.

The protein resides in the mitochondrion matrix. It localises to the cytoplasm. It is found in the nucleus. It carries out the reaction (S)-malate = fumarate + H2O. The protein operates within carbohydrate metabolism; tricarboxylic acid cycle; (S)-malate from fumarate: step 1/1. Its function is as follows. Catalyzes the reversible stereospecific interconversion of fumarate to L-malate. In mitochondrion, catalyzes the hydration of fumarate to L-malate in the tricarboxylic acid (TCA) cycle to facilitate a transition step in the production of energy in the form of NADH. In cytoplasm and nucleus, involved in DNA repair in response to DNA damage: following DNA double-strand breaks (DSBs), translocates from the cytosol to the nucleus and promotes DNA repair by catalyzing the dehydration of L-malate to fumarate. This Rhizopus oryzae (Mucormycosis agent) protein is Fumarate hydratase, mitochondrial.